A 247-amino-acid polypeptide reads, in one-letter code: uncharacterized protein (247 aa).

2 helical membrane-spanning segments follow: residues 9–29 (IIAICLIFLSILVYSIHFLIF) and 37–57 (SYFLLHLAFVPIEVLLVSLII).

The protein localises to the cell membrane. This is an uncharacterized protein from Methanocaldococcus jannaschii (strain ATCC 43067 / DSM 2661 / JAL-1 / JCM 10045 / NBRC 100440) (Methanococcus jannaschii).